The chain runs to 206 residues: Protein GET1 (206 aa).

The Lumenal segment spans residues 1-4 (MPSL). Residues 5–24 (LITALFLNVIIYVINTVGAA) form a helical membrane-spanning segment. At 25-110 (TVDGLLWLLY…TFDITIKIAR (86 aa)) the chain is on the cytoplasmic side. Residues 75 to 100 (AKLRRRHDKALEAYEAKNNELTQSKS) are a coiled coil. The helical transmembrane segment at 111 to 131 (WAATSGLMLFLQFWYSKTPIF) threads the bilayer. The Lumenal segment spans residues 132–155 (TLPPGWIPWQVQWVLSFPRAPMGT). Residues 156–172 (VSIQIWSGACATVVALV) traverse the membrane as a helical segment. The Cytoplasmic segment spans residues 173-206 (GDAMKASLAYVSKPKIDRIKLGATMEGKEGKKRQ).

This sequence belongs to the WRB/GET1 family. In terms of assembly, interacts with GET3.

The protein localises to the endoplasmic reticulum membrane. Functionally, required for the post-translational delivery of tail-anchored (TA) proteins to the endoplasmic reticulum. Acts as a membrane receptor for soluble GET3, which recognizes and selectively binds the transmembrane domain of TA proteins in the cytosol. The chain is Protein GET1 from Ajellomyces capsulatus (strain H143) (Darling's disease fungus).